A 1020-amino-acid polypeptide reads, in one-letter code: RNA-binding protein 44 (1020 aa).

Disordered regions lie at residues 1–23 (MQAT…GHLQ) and 50–70 (DGEG…NSSV). Over residues 58 to 70 (TDERTNVKENSSV) the composition is skewed to basic and acidic residues. 6 positions are modified to phosphoserine: serine 249, serine 371, serine 374, serine 516, serine 683, and serine 690. Positions 796-870 (FLIHVGGLCP…KSVNVRLVKI (75 aa)) constitute an RRM domain.

As to quaternary structure, homodimer. Interacts with TEX14.

It localises to the cytoplasm. In terms of biological role, component of intercellular bridges during meiosis. Intercellular bridges are evolutionarily conserved structures that connect differentiating germ cells. Not required for fertility. The sequence is that of RNA-binding protein 44 (Rbm44) from Rattus norvegicus (Rat).